A 481-amino-acid polypeptide reads, in one-letter code: Glutamyl-tRNA(Gln) amidotransferase subunit A (481 aa).

Catalysis depends on charge relay system residues Lys78 and Ser153. Ser177 acts as the Acyl-ester intermediate in catalysis.

This sequence belongs to the amidase family. GatA subfamily. In terms of assembly, heterotrimer of A, B and C subunits.

The enzyme catalyses L-glutamyl-tRNA(Gln) + L-glutamine + ATP + H2O = L-glutaminyl-tRNA(Gln) + L-glutamate + ADP + phosphate + H(+). Allows the formation of correctly charged Gln-tRNA(Gln) through the transamidation of misacylated Glu-tRNA(Gln) in organisms which lack glutaminyl-tRNA synthetase. The reaction takes place in the presence of glutamine and ATP through an activated gamma-phospho-Glu-tRNA(Gln). This is Glutamyl-tRNA(Gln) amidotransferase subunit A from Borreliella afzelii (strain PKo) (Borrelia afzelii).